Here is a 161-residue protein sequence, read N- to C-terminus: Ribosome maturation factor RimP (161 aa).

The protein belongs to the RimP family.

The protein resides in the cytoplasm. Functionally, required for maturation of 30S ribosomal subunits. In Myxococcus xanthus (strain DK1622), this protein is Ribosome maturation factor RimP.